We begin with the raw amino-acid sequence, 65 residues long: Large ribosomal subunit protein bL35 (65 aa).

It belongs to the bacterial ribosomal protein bL35 family.

This chain is Large ribosomal subunit protein bL35, found in Polynucleobacter asymbioticus (strain DSM 18221 / CIP 109841 / QLW-P1DMWA-1) (Polynucleobacter necessarius subsp. asymbioticus).